We begin with the raw amino-acid sequence, 538 residues long: L-aspartate oxidase (538 aa).

FAD is bound by residues 14–17 (SGAA), lysine 36, 43–50 (STYWAQGG), and aspartate 223. Arginine 290 acts as the Proton donor/acceptor in catalysis. Residues glutamate 375 and 391 to 392 (SL) contribute to the FAD site.

Belongs to the FAD-dependent oxidoreductase 2 family. NadB subfamily. FAD serves as cofactor.

The protein localises to the cytoplasm. The enzyme catalyses L-aspartate + O2 = iminosuccinate + H2O2. It functions in the pathway cofactor biosynthesis; NAD(+) biosynthesis; iminoaspartate from L-aspartate (oxidase route): step 1/1. Its function is as follows. Catalyzes the oxidation of L-aspartate to iminoaspartate, the first step in the de novo biosynthesis of NAD(+). The chain is L-aspartate oxidase (nadB) from Pseudomonas aeruginosa (strain ATCC 15692 / DSM 22644 / CIP 104116 / JCM 14847 / LMG 12228 / 1C / PRS 101 / PAO1).